Consider the following 113-residue polypeptide: Class I hydrophobin 1 (113 aa).

The signal sequence occupies residues 1 to 17 (MQFKFLSTVALATLAVA). Intrachain disulfides connect cysteine 32–cysteine 92, cysteine 39–cysteine 86, cysteine 40–cysteine 73, and cysteine 93–cysteine 106.

The protein belongs to the fungal hydrophobin family. In terms of assembly, self-assembles to form functional amyloid fibrils called rodlets. Self-assembly into fibrillar rodlets occurs spontaneously at hydrophobic:hydrophilic interfaces and the rodlets further associate laterally to form amphipathic monolayers.

The protein resides in the secreted. It localises to the cell wall. Functionally, aerial growth, conidiation, and dispersal of filamentous fungi in the environment rely upon a capability of their secreting small amphipathic proteins called hydrophobins (HPBs) with low sequence identity. Class I can self-assemble into an outermost layer of rodlet bundles on aerial cell surfaces, conferring cellular hydrophobicity that supports fungal growth, development and dispersal; whereas Class II form highly ordered films at water-air interfaces through intermolecular interactions but contribute nothing to the rodlet structure. CoH1 is an asexual monokaryon-specific class I hydrophobin that is involved in aerial growth of mycelia. The polypeptide is Class I hydrophobin 1 (Coprinopsis cinerea (Inky cap fungus)).